The sequence spans 656 residues: Chaperone protein DnaK (656 aa).

The residue at position 204 (threonine 204) is a Phosphothreonine; by autocatalysis. Residues 607 to 656 (VYAKKGGAAGAPPGGEAEGEPQAQAGGKKEDVVDAEFEEVKDEKKKDEDK) form a disordered region. Positions 620–632 (GGEAEGEPQAQAG) are enriched in low complexity. Positions 647–656 (KDEKKKDEDK) are enriched in basic and acidic residues.

It belongs to the heat shock protein 70 family.

Functionally, acts as a chaperone. The chain is Chaperone protein DnaK from Coxiella burnetii (strain CbuK_Q154) (Coxiella burnetii (strain Q154)).